The primary structure comprises 302 residues: Probable alpha-L-glutamate ligase (302 aa).

The ATP-grasp domain occupies 104–287 (LQLLSRKGLG…IAGQIIEYIE (184 aa)). ATP contacts are provided by residues K141, 178-179 (EY), D187, and 211-213 (RSN). 3 residues coordinate Mg(2+): D248, E260, and N262. Residues D248, E260, and N262 each contribute to the Mn(2+) site.

The protein belongs to the RimK family. Requires Mg(2+) as cofactor. Mn(2+) is required as a cofactor.

This chain is Probable alpha-L-glutamate ligase, found in Chromohalobacter salexigens (strain ATCC BAA-138 / DSM 3043 / CIP 106854 / NCIMB 13768 / 1H11).